A 382-amino-acid polypeptide reads, in one-letter code: Lycopene beta-cyclase (382 aa).

Residue 6–36 (DLILVGAGLANGLIALRLQQQQPDMRILLID) coordinates NAD(+).

The protein belongs to the lycopene cyclase family. FAD is required as a cofactor.

Its subcellular location is the cell inner membrane. The enzyme catalyses a carotenoid psi-end group = a carotenoid beta-end derivative. It carries out the reaction all-trans-lycopene = gamma-carotene. It catalyses the reaction gamma-carotene = all-trans-beta-carotene. The catalysed reaction is all-trans-neurosporene = beta-zeacarotene. The enzyme catalyses beta-zeacarotene = 7,8-dihydro-beta-carotene. The protein operates within carotenoid biosynthesis; beta-carotene biosynthesis. With respect to regulation, activity is increased in the presence of NAD(P)H. NADPH is not involved directly in the cyclization reaction, but must play an indirect role, e.g. as an allosteric activator. Functionally, catalyzes the double cyclization reaction which converts lycopene to beta-carotene. Also catalyzes the double cyclization reaction which converts neurosporene to 7,8-dihydro-beta-carotene via monocyclic beta-zeacarotene. May also convert zeta-carotene to bicyclic 7,8,7',8'-tetrahydro-beta-carotene. The sequence is that of Lycopene beta-cyclase from Pantoea ananas (Erwinia uredovora).